We begin with the raw amino-acid sequence, 303 residues long: Acetylglutamate kinase (303 aa).

Residues 73–74 (GG), arginine 95, and asparagine 194 contribute to the substrate site.

Belongs to the acetylglutamate kinase family. ArgB subfamily.

It localises to the cytoplasm. It catalyses the reaction N-acetyl-L-glutamate + ATP = N-acetyl-L-glutamyl 5-phosphate + ADP. It participates in amino-acid biosynthesis; L-arginine biosynthesis; N(2)-acetyl-L-ornithine from L-glutamate: step 2/4. Functionally, catalyzes the ATP-dependent phosphorylation of N-acetyl-L-glutamate. This is Acetylglutamate kinase from Saccharopolyspora erythraea (strain ATCC 11635 / DSM 40517 / JCM 4748 / NBRC 13426 / NCIMB 8594 / NRRL 2338).